The primary structure comprises 449 residues: MSHITFDYSKVLESFAGQHEIDFLQGQVTEADKLLREGTGPGSDFLGWLDLPENYDEEEFARILTAAEKIKSDSEVLVVIGIGGSYLGAKAAIDFLNHHFANLQTAKERKAPQILYAGNSISSTYLADLVEYVQDKEFSVNVISKSGTTTEPAIAFRVFKELLVKKYGQEEASKRIYATTDKVKGAVKVEADANNWETFVVPDNVGGRFSVLTAVGLLPIAASGADITALMEGANAARKDLSSDKISENIAYQYAAVRNLLYRKGYITEILANYEPSLQYFGEWWKQLAGESEGKDQKGIYPTSANFSTDLHSLGQFIQEGYRNLFETVIRVDNPRKNVIIPELAEDLDGLGYLQGKDVDFVNKKATDGVLLAHTDGGVPNMFVTLPAQDEFTLGYTIYFFELAIAVSGYMNAVNPFDQPGVEAYKRNMFALLGKPGFEALSAELNARL.

E291 acts as the Proton donor in catalysis. Active-site residues include H312 and K426.

The protein belongs to the GPI family.

Its subcellular location is the cytoplasm. The enzyme catalyses alpha-D-glucose 6-phosphate = beta-D-fructose 6-phosphate. Its pathway is carbohydrate biosynthesis; gluconeogenesis. It participates in carbohydrate degradation; glycolysis; D-glyceraldehyde 3-phosphate and glycerone phosphate from D-glucose: step 2/4. In terms of biological role, catalyzes the reversible isomerization of glucose-6-phosphate to fructose-6-phosphate. This chain is Glucose-6-phosphate isomerase, found in Streptococcus pyogenes serotype M3 (strain ATCC BAA-595 / MGAS315).